A 263-amino-acid chain; its full sequence is (R)-S-adenosyl-L-methionine hydrolase (263 aa).

Adenosine-binding residues include aspartate 18, aspartate 82, and asparagine 181. (R)-S-adenosyl-L-methionine contacts are provided by asparagine 181, tyrosine 221, serine 234, glutamate 239, and methionine 244.

Belongs to the SAM hydrolase / SAM-dependent halogenase family. As to quaternary structure, homotrimer.

It carries out the reaction (R)-S-adenosyl-L-methionine + H2O = adenosine + L-methionine + H(+). Its function is as follows. Catalyzes the hydrolysis of S-adenosyl-L-methionine (SAM) into adenosine and L-methionine. Does not have chlorinase or fluorinase activity. The protein is (R)-S-adenosyl-L-methionine hydrolase of Methanocaldococcus jannaschii (strain ATCC 43067 / DSM 2661 / JAL-1 / JCM 10045 / NBRC 100440) (Methanococcus jannaschii).